The following is a 93-amino-acid chain: YcgL domain-containing protein KPK_1976 (93 aa).

Residues 1–85 (MFCVIYRSTK…PSENLLKKHL (85 aa)) form the YcgL domain.

The sequence is that of YcgL domain-containing protein KPK_1976 from Klebsiella pneumoniae (strain 342).